The chain runs to 830 residues: Envelope glycoprotein B (830 aa).

The first 22 residues, 1–22 (MSKMAVLFLAVFLMNSVLMIYC), serve as a signal peptide directing secretion. Residues 23–688 (DPDHYIRAGY…GGVVSFLKNP (666 aa)) lie on the Virion surface side of the membrane. Disulfide bonds link cysteine 41/cysteine 482, cysteine 58/cysteine 438, cysteine 131/cysteine 197, and cysteine 290/cysteine 337. The involved in fusion and/or binding to host membrane stretch occupies residues 98-104 (SYRDVGV). Residue asparagine 155 is glycosylated (N-linked (GlcNAc...) asparagine; by host). Residues 184–191 (GPLWLYST) form an involved in fusion and/or binding to host membrane region. Residues asparagine 228, asparagine 247, asparagine 286, asparagine 307, asparagine 329, asparagine 355, asparagine 361, and asparagine 486 are each glycosylated (N-linked (GlcNAc...) asparagine; by host). Cysteine 510 and cysteine 548 form a disulfide bridge. Hydrophobic membrane proximal region regions lie at residues 634 to 686 (IEAK…SFLK) and 644 to 685 (SYVN…VSFL). A helical membrane pass occupies residues 689 to 709 (FGGGLMLILAIVVVVIIIVVF). At 710 to 830 (VRQRHVLSKP…GYKSVNVEEA (121 aa)) the chain is on the intravirion side. The short motif at 822-825 (YKSV) is the Internalization motif element.

Belongs to the herpesviridae glycoprotein B family. Homotrimer; disulfide-linked. Binds to heparan sulfate proteoglycans. Interacts with gH/gL heterodimer. Post-translationally, a proteolytic cleavage by host furin generates two subunits that remain linked by disulfide bonds.

It localises to the virion membrane. The protein resides in the host cell membrane. Its subcellular location is the host endosome membrane. It is found in the host Golgi apparatus membrane. Its function is as follows. Envelope glycoprotein that forms spikes at the surface of virion envelope. Essential for the initial attachment to heparan sulfate moieties of the host cell surface proteoglycans. Involved in fusion of viral and cellular membranes leading to virus entry into the host cell. Following initial binding to its host receptors, membrane fusion is mediated by the fusion machinery composed at least of gB and the heterodimer gH/gL. May be involved in the fusion between the virion envelope and the outer nuclear membrane during virion egress. The polypeptide is Envelope glycoprotein B (Human herpesvirus 6A (strain Uganda-1102) (HHV-6 variant A)).